We begin with the raw amino-acid sequence, 222 residues long: Zinc finger C2HC domain-containing protein 1B (222 aa).

The segment at 14 to 43 (ELFPCEVCGRRFAADVLERHGPICKKLFNR) adopts a C2HC/C3H-type 1 zinc-finger fold. Positions 18, 21, 33, and 37 each coordinate Zn(2+). The tract at residues 48 to 78 (FSSLKQRLQGTDIPTVKKTPQSKSPPVRKSN) is disordered. Residues 117–146 (DYIQRPYCMRRFNESAAERHTNFCKDQSSR) form a C2HC/C3H-type 2; degenerate zinc finger. The tract at residues 196-222 (PTKSGLAMDPASGAKLRQGFSKSSKKD) is disordered.

The protein belongs to the ZC2HC1 family. The cofactor is Zn(2+).

This is Zinc finger C2HC domain-containing protein 1B (ZC2HC1B) from Homo sapiens (Human).